Here is a 420-residue protein sequence, read N- to C-terminus: Senescence-associated protein SPA15, chloroplastic (420 aa).

Residues 1 to 68 (MAKPNGIIYS…YIATRGSSLR (68 aa)) constitute a chloroplast transit peptide. A disordered region spans residues 85–111 (EYRDSSDTSSMQGKDKDPASLGKSGTP).

This sequence belongs to the ATA15/OSA15 family. As to expression, expressed in leaves.

It is found in the plastid. It localises to the chloroplast. May be involved in the regulation of leaf senescence. The sequence is that of Senescence-associated protein SPA15, chloroplastic from Ipomoea batatas (Sweet potato).